A 180-amino-acid polypeptide reads, in one-letter code: ATP synthase subunit delta (180 aa).

The protein belongs to the ATPase delta chain family. F-type ATPases have 2 components, F(1) - the catalytic core - and F(0) - the membrane proton channel. F(1) has five subunits: alpha(3), beta(3), gamma(1), delta(1), epsilon(1). F(0) has three main subunits: a(1), b(2) and c(10-14). The alpha and beta chains form an alternating ring which encloses part of the gamma chain. F(1) is attached to F(0) by a central stalk formed by the gamma and epsilon chains, while a peripheral stalk is formed by the delta and b chains.

It is found in the cell inner membrane. In terms of biological role, f(1)F(0) ATP synthase produces ATP from ADP in the presence of a proton or sodium gradient. F-type ATPases consist of two structural domains, F(1) containing the extramembraneous catalytic core and F(0) containing the membrane proton channel, linked together by a central stalk and a peripheral stalk. During catalysis, ATP synthesis in the catalytic domain of F(1) is coupled via a rotary mechanism of the central stalk subunits to proton translocation. Functionally, this protein is part of the stalk that links CF(0) to CF(1). It either transmits conformational changes from CF(0) to CF(1) or is implicated in proton conduction. The polypeptide is ATP synthase subunit delta (Cupriavidus necator (strain ATCC 17699 / DSM 428 / KCTC 22496 / NCIMB 10442 / H16 / Stanier 337) (Ralstonia eutropha)).